We begin with the raw amino-acid sequence, 318 residues long: MNYQVLLYYKYMTIDDPEQFAQDHLAFCKAHHLKGRILVSTEGINGTLSGTKEETEQYMAHMHADERFKDMVFKIDEAEGHAFKKMHVRPRKEIVALDLEEDVDPRHTTGQYLSPVEFRKALEDDDTVIIDARNDYEFDLGHFRGAIRPNITRFRDLPDWIKENKALFADKKVVTYCTGGIRCEKFSGWLLKEGFEDIAQLHGGIATYGKDPETKGQYWDGKMYVFDDRISVDINEVEKTIIGKDWFDGKPCERYINCANPECNKQILVSEENEAKYLGACSYECAKHERNRYVQANNISDNEWQHRLTNFDDLHQHA.

Residues glutamate 123–glutamine 217 enclose the Rhodanese domain. Cysteine 177 functions as the Cysteine persulfide intermediate in the catalytic mechanism.

Belongs to the TrhO family.

It catalyses the reaction uridine(34) in tRNA + AH2 + O2 = 5-hydroxyuridine(34) in tRNA + A + H2O. Functionally, catalyzes oxygen-dependent 5-hydroxyuridine (ho5U) modification at position 34 in tRNAs. The chain is tRNA uridine(34) hydroxylase from Staphylococcus aureus (strain bovine RF122 / ET3-1).